The sequence spans 1245 residues: MANYLAQFQTIKSSCDRIVVAVEDVSDLWLNVKESFEQRLPVKKACLNNKARNPVFVENLPAEFIQTTDSRLRSRFPQDQYLFWFREPYATVVLVSCEDLDEFKTILKPRLKLIVQNDEREWFIVFVSKAHPSNDQASKMAKRVYARLESDFNTKKRERCCKFDLHGPDAEFWDDFDSKMVDCIRNTLDRRVQFYEEEIRRLSEQRFTPIWNFCNFFILKESLAFMFEMTNLHEDSLREYDELELCYSESVNSPGKHREFGGLDTGDDQAALLNPGFKALTQIVQDDVFREFEFRQYIFACQAKLLFKLHRPIEVAARGYAFVVSFSKTLALQENGLPFCFREVWVITACMDLIKATTSHYDGTAVAIDSEREFCRIQGDLYSLCRIKFLRLAYLIGYGVEIEKSPVNSASLSMLPWPKPATWPSIPPDSSAETMAKEKMILQAKSREKIFNIHRKPLPLEPSLLLREANRRRAFLSVGNISELYDSGDGSGLDANSKPSPNKSASNYMARTMSGPATSETSLPVDRPMRLSEIHVAAEHALKQTVSDPNFMTSLSSLEEFEKRYMELTKGAADNYHHSWWKRHGVVLDGEIAALFFKHENYDLAAKSYEKVCALYSAEGWEELLADVLPDLAECQKILNDEAGYLTSCVKLLSLESGLFSSKERQAFQSEVVRLAHSEMKHPVPLDVSSLITFAGNPAPPLELCDGDPGTLSVAVWSAFPDDITLESLSLRLSASSSADEGLKAIKSSDARVLVPGRNIITFDIPPQKPGSYVLGALTGQIGKLSFRSHGFSQDGPVDTDEFMSFEKPTRPVLKVRKPRALVDITPAVSSALLMNELQWIGLIVKPIDYSLKDGILHIDAGAGLKIEESQMIEIETYGSDVEHVGGTDASKTSSSSTDTRKVEKVPIEDGKIKIPDWASDVTTLVWFPVRAIDDTIARGASPASPQKQSIVDGMRMIALKLEFGVFLNQVFERTIAVHFTNPFHVSTRVVDKCYDGTLLLQVILHSEVKATLHVKDIWLDLQSGFEHTGKGDGRPTSNLFPLVIAPSSRAGILFVIRLSALGDMDELEKADSMLNIKYGISGDRTTGAHSPVPVKPDDSEELVFKIAVKMKRPVLDPCVAVGFLPFSSDCLRVGQLVNMRWRVERLKNPEDASLLADEILYQVDANPQNWMVAGRKCGHVSLSNKQGSRIEITVTCVPLVSGYVHPPQLGLPHVGEANISCNPAGPHLVCVLPPTLSTSYCIPA.

Disordered regions lie at residues 488–524 (GDGSGLDANSKPSPNKSASNYMARTMSGPATSETSLP) and 884–903 (HVGGTDASKTSSSSTDTRKV). Low complexity-rich tracts occupy residues 495–507 (ANSKPSPNKSASN) and 888–898 (TDASKTSSSST).

It belongs to the TMEM1 family. Part of the multisubunit TRAPP (transport protein particle) II complex composed of BET3, BET5, TRS20, TRS23, TRS31, TRS33, TRS65, TRS85, TRS120 and TRS130.

It is found in the golgi apparatus. The protein localises to the trans-Golgi network. Its subcellular location is the early endosome. Specific subunit of the TRAPP II complex, a highly conserved vesicle tethering complex that is required for the proper transport of proteins in post-Golgi trafficking pathways to the growing cell plate in mitotic active cells. This chain is Trafficking protein particle complex II-specific subunit 130 homolog, found in Oryza sativa subsp. japonica (Rice).